The primary structure comprises 497 residues: tRNA-2-methylthio-N(6)-dimethylallyladenosine synthase (497 aa).

Positions 1-50 (MTGTSNIPTHGKEHKDAPALLPLPAPNPHHTHAAHPGNPSHDRPPSRGKL) are disordered. Residues 48 to 165 (GKLFIKTHGC…LPDMIRARRE (118 aa)) form the MTTase N-terminal domain. [4Fe-4S] cluster-binding residues include Cys-57, Cys-94, Cys-128, Cys-202, Cys-206, and Cys-209. The Radical SAM core domain occupies 188-430 (RAEGPSAFVS…QKHINTYAAD (243 aa)). In terms of domain architecture, TRAM spans 433-496 (KRMIGTVQTV…SNSLRGRVHT (64 aa)).

It belongs to the methylthiotransferase family. MiaB subfamily. In terms of assembly, monomer. It depends on [4Fe-4S] cluster as a cofactor.

It localises to the cytoplasm. It carries out the reaction N(6)-dimethylallyladenosine(37) in tRNA + (sulfur carrier)-SH + AH2 + 2 S-adenosyl-L-methionine = 2-methylsulfanyl-N(6)-dimethylallyladenosine(37) in tRNA + (sulfur carrier)-H + 5'-deoxyadenosine + L-methionine + A + S-adenosyl-L-homocysteine + 2 H(+). Functionally, catalyzes the methylthiolation of N6-(dimethylallyl)adenosine (i(6)A), leading to the formation of 2-methylthio-N6-(dimethylallyl)adenosine (ms(2)i(6)A) at position 37 in tRNAs that read codons beginning with uridine. The sequence is that of tRNA-2-methylthio-N(6)-dimethylallyladenosine synthase from Xylella fastidiosa (strain 9a5c).